The following is a 400-amino-acid chain: MTERVVLAYSGGLDTSVAIGWIGAETGADVVALAVDVGQGGEDLEAIRQRALTCGAVESIVVDAREEFAESFVAPAIKSNALYMDRYPLISSLSRPVIVRHLVAAAREHGADAIAHGCTGKGNDQVRFEVGVAALAPGLSVLAPVRDSGMTRDKAIAFAEERGLPIDVSKKSPYSIDQNLWGRTAECGVLEDPWAQPPEDVFVYSADPTVARIPDEVTISFIDGVPVGLDGRSLPLADLVAELNVRAGAHGVGRIDLIEDRLVGIKSREIYECPAAITLLTAHRDLEDLTLERDVARFKRGIDQRWGEIVYDGLWYSPLKSALDAFVDSASAGVSGEVRIRLVGGVAQVVGRRSPASLYDHALATYDAGDQFDQRDARGFIELWGLPTKVWAAREQRLNP.

An ATP-binding site is contributed by 8-16; sequence AYSGGLDTS. L-citrulline-binding residues include Y87 and S92. G117 is an ATP binding site. L-aspartate-binding residues include T119, N123, and D124. Residue N123 participates in L-citrulline binding. Residues R127, S175, E259, and Y271 each contribute to the L-citrulline site.

Belongs to the argininosuccinate synthase family. Type 1 subfamily. As to quaternary structure, homotetramer.

The protein localises to the cytoplasm. The catalysed reaction is L-citrulline + L-aspartate + ATP = 2-(N(omega)-L-arginino)succinate + AMP + diphosphate + H(+). It participates in amino-acid biosynthesis; L-arginine biosynthesis; L-arginine from L-ornithine and carbamoyl phosphate: step 2/3. The protein is Argininosuccinate synthase of Frankia casuarinae (strain DSM 45818 / CECT 9043 / HFP020203 / CcI3).